The following is a 444-amino-acid chain: Trigger factor (444 aa).

The PPIase FKBP-type domain occupies 165 to 250 (GDFAKFDFEG…LHEIQELKIP (86 aa)).

It belongs to the FKBP-type PPIase family. Tig subfamily.

It is found in the cytoplasm. It catalyses the reaction [protein]-peptidylproline (omega=180) = [protein]-peptidylproline (omega=0). Involved in protein export. Acts as a chaperone by maintaining the newly synthesized protein in an open conformation. Functions as a peptidyl-prolyl cis-trans isomerase. The sequence is that of Trigger factor (tig) from Campylobacter jejuni subsp. jejuni serotype O:2 (strain ATCC 700819 / NCTC 11168).